The chain runs to 484 residues: Cobyric acid synthase (484 aa).

The GATase cobBQ-type domain occupies 251 to 438; that stretch reads ALKIAVPMLP…LHGLFGSDAY (188 aa). The Nucleophile role is filled by C333. Residue H430 is part of the active site.

Belongs to the CobB/CobQ family. CobQ subfamily.

It participates in cofactor biosynthesis; adenosylcobalamin biosynthesis. In terms of biological role, catalyzes amidations at positions B, D, E, and G on adenosylcobyrinic A,C-diamide. NH(2) groups are provided by glutamine, and one molecule of ATP is hydrogenolyzed for each amidation. This chain is Cobyric acid synthase, found in Rhizobium etli (strain ATCC 51251 / DSM 11541 / JCM 21823 / NBRC 15573 / CFN 42).